We begin with the raw amino-acid sequence, 318 residues long: Malonyl CoA-acyl carrier protein transacylase, mitochondrial (318 aa).

It belongs to the FabD family.

The protein localises to the mitochondrion. The enzyme catalyses holo-[ACP] + malonyl-CoA = malonyl-[ACP] + CoA. It participates in lipid metabolism; fatty acid biosynthesis. In terms of biological role, involved in biosynthesis of fatty acids in mitochondria. This chain is Malonyl CoA-acyl carrier protein transacylase, mitochondrial (mct1), found in Schizosaccharomyces pombe (strain 972 / ATCC 24843) (Fission yeast).